A 335-amino-acid chain; its full sequence is Atypical chemokine receptor 1 (335 aa).

The Extracellular segment spans residues 1–62 (MGNCLHPAEL…CNLLDDSALP (62 aa)). N-linked (GlcNAc...) asparagine glycans are attached at residues Asn-16, Asn-26, and Asn-32. Cystine bridges form between Cys-50-Cys-275 and Cys-128-Cys-194. The chain crosses the membrane as a helical span at residues 63–83 (FFILVSVLGILASGTVLFMFF). Residues 84–94 (RPLFHWQLCPG) are Cytoplasmic-facing. A helical membrane pass occupies residues 95–115 (WPVLAQLAVGSALFSIVVPIL). Residues 116 to 128 (APGLGNTRSSALC) are Extracellular-facing. A helical transmembrane segment spans residues 129-152 (SLGYCVWYGSAFAQALLLGCHASL). Over 153–165 (GPKLGAGQVPGLT) the chain is Cytoplasmic. The helical transmembrane segment at 166–186 (LGLSVGLWGVAALLTLPITLA) threads the bilayer. The Extracellular portion of the chain corresponds to 187-206 (SGASGGLCTPAYSMELKALQ). The chain crosses the membrane as a helical span at residues 207 to 227 (ATHAVACLAVFVLLPLGLFGA). Residues 228-243 (KGLKKALGMGPGPWMN) lie on the Cytoplasmic side of the membrane. A helical transmembrane segment spans residues 244–264 (ILWAWFIFWWPHGVVLGLDFL). Over 265 to 286 (VRSKLLLLSTCLAQQALDLLLN) the chain is Extracellular. The chain crosses the membrane as a helical span at residues 287-307 (LAEALAILHCVATPLLLALFC). The Cytoplasmic portion of the chain corresponds to 308–335 (HQATRTLLPSLPLPEGWSSHLDTLGSES).

This sequence belongs to the G-protein coupled receptor 1 family. Atypical chemokine receptor subfamily. In terms of assembly, (Microbial infection) Interacts (via N-terminal extracellular domain) with Plasmodium knowlesi Duffy receptor alpha form (DBPalpha) (via region II).

It localises to the early endosome. The protein localises to the recycling endosome. Its subcellular location is the membrane. Functionally, atypical chemokine receptor that controls chemokine levels and localization via high-affinity chemokine binding that is uncoupled from classic ligand-driven signal transduction cascades, resulting instead in chemokine sequestration, degradation, or transcytosis. Also known as interceptor (internalizing receptor) or chemokine-scavenging receptor or chemokine decoy receptor. Has a promiscuous chemokine-binding profile, interacting with inflammatory chemokines of both the CXC and the CC subfamilies but not with homeostatic chemokines. Acts as a receptor for chemokines including CCL2, CCL5, CCL7, CCL11, CCL13, CCL14, CCL17, CXCL5, CXCL6, IL8/CXCL8, CXCL11, GRO, RANTES, MCP-1 and TARC. May regulate chemokine bioavailability and, consequently, leukocyte recruitment through two distinct mechanisms: when expressed in endothelial cells, it sustains the abluminal to luminal transcytosis of tissue-derived chemokines and their subsequent presentation to circulating leukocytes; when expressed in erythrocytes, serves as blood reservoir of cognate chemokines but also as a chemokine sink, buffering potential surges in plasma chemokine levels. (Microbial infection) Acts as a receptor for the malaria parasite Plasmodium knowlesi. This chain is Atypical chemokine receptor 1 (ACKR1), found in Macaca mulatta (Rhesus macaque).